A 408-amino-acid chain; its full sequence is Peptidase T (408 aa).

His-78 serves as a coordination point for Zn(2+). Asp-80 is an active-site residue. Asp-141 is a binding site for Zn(2+). Residue Glu-175 is the Proton acceptor of the active site. Positions 176, 198, and 380 each coordinate Zn(2+).

The protein belongs to the peptidase M20B family. The cofactor is Zn(2+).

The protein localises to the cytoplasm. It carries out the reaction Release of the N-terminal residue from a tripeptide.. Functionally, cleaves the N-terminal amino acid of tripeptides. The sequence is that of Peptidase T from Clostridium acetobutylicum (strain ATCC 824 / DSM 792 / JCM 1419 / IAM 19013 / LMG 5710 / NBRC 13948 / NRRL B-527 / VKM B-1787 / 2291 / W).